The following is a 394-amino-acid chain: Guanine nucleotide-binding protein G(s) subunit alpha (394 aa).

The disordered stretch occupies residues 1–25 (MGCLGDSKTEDQRNEEKAQREANKK). Gly2 carries N-palmitoyl glycine lipidation. Residue Cys3 is the site of S-palmitoyl cysteine attachment. The span at 7–25 (SKTEDQRNEEKAQREANKK) shows a compositional bias: basic and acidic residues. The G-alpha domain maps to 39-394 (ATHRLLLLGA…RMHLRQYELL (356 aa)). The interval 42–55 (RLLLLGAGESGKST) is G1 motif. 47 to 55 (GAGESGKST) contributes to the GTP binding site. A Mg(2+)-binding site is contributed by Ser54. The segment at 68-90 (FNGEGGEEDPQAARSNSDGEKAT) is disordered. Positions 196-204 (DLLRCRVLT) are G2 motif. GTP is bound by residues 197–204 (LLRCRVLT), 223–227 (DVGGQ), 292–295 (NKQD), and Ala366. Thr204 contributes to the Mg(2+) binding site. The G3 motif stretch occupies residues 219–228 (FHMFDVGGQR). The tract at residues 288-295 (ILFLNKQD) is G4 motif. The segment at 364 to 369 (TCAVDT) is G5 motif.

The protein belongs to the G-alpha family. G(s) subfamily. In terms of assembly, heterotrimeric G proteins are composed of 3 units; alpha, beta and gamma. The alpha chain contains the guanine nucleotide binding site. Interacts with CRY1; the interaction may block GPCR-mediated regulation of cAMP concentrations. Interacts with ADCY6 and stimulates its adenylyl cyclase activity. Interacts with ADCY2 and ADCY5. Stimulates the ADCY5 adenylyl cyclase activity. Interaction with SASH1.

It is found in the cell membrane. Guanine nucleotide-binding proteins (G proteins) function as transducers in numerous signaling pathways controlled by G protein-coupled receptors (GPCRs). Signaling involves the activation of adenylyl cyclases, resulting in increased levels of the signaling molecule cAMP. GNAS functions downstream of several GPCRs, including beta-adrenergic receptors. Stimulates the Ras signaling pathway via RAPGEF2. In Cricetulus longicaudatus (Long-tailed dwarf hamster), this protein is Guanine nucleotide-binding protein G(s) subunit alpha (GNAS).